We begin with the raw amino-acid sequence, 330 residues long: Trans-1,2-dihydrobenzene-1,2-diol dehydrogenase (330 aa).

Belongs to the Gfo/Idh/MocA family. As to quaternary structure, homodimer.

The enzyme catalyses (1R,2R)-1,2-dihydrobenzene-1,2-diol + NADP(+) = catechol + NADPH + H(+). The catalysed reaction is D-xylose + NADP(+) = D-xylono-1,5-lactone + NADPH + H(+). The protein is Trans-1,2-dihydrobenzene-1,2-diol dehydrogenase (dhdh) of Xenopus tropicalis (Western clawed frog).